The primary structure comprises 74 residues: Acyl carrier protein (74 aa).

Residues 1–74 (MFEKVRKIIA…DVVEYIKNNS (74 aa)) form the Carrier domain. At Ser-34 the chain carries O-(pantetheine 4'-phosphoryl)serine.

Belongs to the acyl carrier protein (ACP) family. Post-translationally, 4'-phosphopantetheine is transferred from CoA to a specific serine of apo-ACP by AcpS. This modification is essential for activity because fatty acids are bound in thioester linkage to the sulfhydryl of the prosthetic group.

Its subcellular location is the cytoplasm. It participates in lipid metabolism; fatty acid biosynthesis. Its function is as follows. Carrier of the growing fatty acid chain in fatty acid biosynthesis. The sequence is that of Acyl carrier protein from Acetivibrio thermocellus (strain ATCC 27405 / DSM 1237 / JCM 9322 / NBRC 103400 / NCIMB 10682 / NRRL B-4536 / VPI 7372) (Clostridium thermocellum).